The chain runs to 411 residues: MEFRYDFSDYKKSDFDPKAQAERVLISVHADSDVNEDKEVARKRLGYALKEVERQITDLIVHEETTLTKNVSSSLNAQSYLQDIEGKLEQLMLVYERIRSLVVIPSENLGPLHEAIVNLHSTYMTLYWLGEFFGIQAKLFPLFQGSINENEKLSRYYQASLLLQESDQLLSRFPLMKRQSSVSLLLKLNITNRSRIIKETSSYLLSQEDQLSFSVNSNGFTNACSVLYMLDKYLLEQDLTRLLSSRIQKAIIQFDSIFQLSPTTRRLLHNSTDPSAANSTIWSKFEDGWYQISKIGAQCVFWERSLQKANICNPDYPNLLEYFQMQPNFILDGATICIYFFKELAISISSKMQMLDRRDPILLRVFRSDFQRVTHIVEQAIARSSSEIVNKDTRECSIVMNSLRVLAPKNP.

This sequence belongs to the COG5 family. In terms of assembly, component of the conserved oligomeric Golgi (COG) complex which consists of eight different proteins cog1-cog8.

The protein resides in the cytoplasm. It localises to the golgi apparatus membrane. Its function is as follows. Acts as essential component of the peripheral membrane COG complex that is involved in intra-Golgi protein trafficking. COG is located at the cis-Golgi, and regulates tethering of retrograde intra-Golgi vesicles and possibly a number of other membrane trafficking events. In Schizosaccharomyces pombe (strain 972 / ATCC 24843) (Fission yeast), this protein is Conserved oligomeric Golgi complex subunit 5 (cog5).